Consider the following 319-residue polypeptide: Aspartate carbamoyltransferase catalytic subunit (319 aa).

Residues R57 and T58 each contribute to the carbamoyl phosphate site. K85 is a binding site for L-aspartate. Residues R107, H135, and Q138 each coordinate carbamoyl phosphate. R168 and R222 together coordinate L-aspartate. Residues G263 and P264 each coordinate carbamoyl phosphate.

It belongs to the aspartate/ornithine carbamoyltransferase superfamily. ATCase family. Heterododecamer (2C3:3R2) of six catalytic PyrB chains organized as two trimers (C3), and six regulatory PyrI chains organized as three dimers (R2).

The catalysed reaction is carbamoyl phosphate + L-aspartate = N-carbamoyl-L-aspartate + phosphate + H(+). The protein operates within pyrimidine metabolism; UMP biosynthesis via de novo pathway; (S)-dihydroorotate from bicarbonate: step 2/3. In terms of biological role, catalyzes the condensation of carbamoyl phosphate and aspartate to form carbamoyl aspartate and inorganic phosphate, the committed step in the de novo pyrimidine nucleotide biosynthesis pathway. This chain is Aspartate carbamoyltransferase catalytic subunit, found in Paracoccus denitrificans (strain Pd 1222).